Consider the following 185-residue polypeptide: MLVVIVGPMFAGKTTELIRRVERYVIAGRRAIVFKPSLDVRYDASKVAAHNGLKFDAFVIPPDKDGVEIIRKMGAEYDVVAVDEIQFFPVDLADALNQLANGRIVIAAGLNLDFRGEPFETTARAMAFADRVISLSAVCKLCGKPATRTQRLINGVPAPRHSPRILIGGNESYEARCRRHYVIPP.

ATP-binding positions include 7–14 and 83–86; these read GPMFAGKT and DEIQ. Catalysis depends on Glu-84, which acts as the Proton acceptor. Zn(2+) contacts are provided by Cys-139, Cys-142, Cys-177, and His-180.

Belongs to the thymidine kinase family. As to quaternary structure, homotetramer.

It is found in the cytoplasm. It carries out the reaction thymidine + ATP = dTMP + ADP + H(+). The chain is Thymidine kinase from Pyrobaculum aerophilum (strain ATCC 51768 / DSM 7523 / JCM 9630 / CIP 104966 / NBRC 100827 / IM2).